The chain runs to 466 residues: Ribulose bisphosphate carboxylase large chain (466 aa).

K4 is modified (N6,N6,N6-trimethyllysine). Substrate contacts are provided by N113 and T163. Catalysis depends on K165, which acts as the Proton acceptor. A substrate-binding site is contributed by K167. Mg(2+) contacts are provided by K191, D193, and E194. At K191 the chain carries N6-carboxylysine. H284 acts as the Proton acceptor in catalysis. The substrate site is built by R285, H317, and S369.

This sequence belongs to the RuBisCO large chain family. Type I subfamily. As to quaternary structure, heterohexadecamer of 8 large chains and 8 small chains; disulfide-linked. The disulfide link is formed within the large subunit homodimers. It depends on Mg(2+) as a cofactor. In terms of processing, the disulfide bond which can form in the large chain dimeric partners within the hexadecamer appears to be associated with oxidative stress and protein turnover.

Its subcellular location is the plastid. It is found in the chloroplast. It carries out the reaction 2 (2R)-3-phosphoglycerate + 2 H(+) = D-ribulose 1,5-bisphosphate + CO2 + H2O. The catalysed reaction is D-ribulose 1,5-bisphosphate + O2 = 2-phosphoglycolate + (2R)-3-phosphoglycerate + 2 H(+). Functionally, ruBisCO catalyzes two reactions: the carboxylation of D-ribulose 1,5-bisphosphate, the primary event in carbon dioxide fixation, as well as the oxidative fragmentation of the pentose substrate in the photorespiration process. Both reactions occur simultaneously and in competition at the same active site. This chain is Ribulose bisphosphate carboxylase large chain, found in Aphelandra sinclairiana (Orange shrimp plant).